The chain runs to 475 residues: Legumain (475 aa).

The N-terminal stretch at 1–15 (MVMMLVMLSLHGTAA) is a signal peptide. The propeptide occupies 16-35 (RLNRREWDSVIQLPTEPVDD). The active site involves His-158. Catalysis depends on Cys-200, which acts as the Nucleophile. A disulfide bond links Cys-233 and Cys-247. Residue Asn-300 is glycosylated (N-linked (GlcNAc...) asparagine). Cystine bridges form between Cys-411–Cys-441 and Cys-423–Cys-458.

Belongs to the peptidase C13 family. As to quaternary structure, homodimer.

It catalyses the reaction Hydrolysis of proteins and small molecule substrates at -Asn-|-Xaa- bonds.. Repressed by various protease inhibitors including p-chloromercuribenzene sulfonic acid (PCMBS), N-ethylmaleimide, kininogen, elastatinal, cystatin EW and leupeptin. In terms of biological role, asparaginyl endopeptidase able to cleave almost all peptide bonds on the carboxyl side of Asn residues, except at the NH2 terminus or second position or with N-glycosylated Asn. Responsible for the maturation (circular permutation) of concanavalin A from its precursor, by performing both cleavage and cleavage-coupled transpeptidation to form conA. The sequence is that of Legumain from Canavalia ensiformis (Jack bean).